The following is a 356-amino-acid chain: Pavine N-methyltransferase (356 aa).

Residues Phe-96, Ser-97, Gly-135, Asn-159, Gln-163, Asp-185, Val-186, and Val-201 each coordinate S-adenosyl-L-homocysteine. Residues Phe-96, Ser-97, Gly-135, Asn-159, Gln-163, Asp-185, Val-186, and Val-201 each contribute to the S-adenosyl-L-methionine site. A (S)-tetrahydropapaverine-binding site is contributed by Glu-205. Cys-331 is a catalytic residue.

This sequence belongs to the CFA/CMAS family. Homodimer.

It is found in the cytoplasm. It carries out the reaction (+-)-pavine + S-adenosyl-L-methionine = N-methylpavine + S-adenosyl-L-homocysteine + H(+). The enzyme catalyses (S)-reticuline + S-adenosyl-L-methionine = (S)-tembetarine + S-adenosyl-L-homocysteine + H(+). The catalysed reaction is (S)-stylopine + S-adenosyl-L-methionine = (S)-cis-N-methylstylopine + S-adenosyl-L-homocysteine. It catalyses the reaction (S)-scoulerine + S-adenosyl-L-methionine = (S)-cis-N-methylscoulerine + S-adenosyl-L-homocysteine. It carries out the reaction (S)-tetrahydropapaverine + S-adenosyl-L-methionine = (S)-N-methyltetrahydropapaverine + S-adenosyl-L-homocysteine + H(+). The enzyme catalyses (S)-tetrahydropalmatine + S-adenosyl-L-methionine = (S)-cis-N-methyltetrahydropalmatine + S-adenosyl-L-homocysteine. It functions in the pathway alkaloid biosynthesis. With respect to regulation, in the presence of a racemic mixture of tetrahydropapaverine (THP), one molecule of (S)-THP binds in a productive mode, while one molecule of (R)-THP is bound next to it in a non-productive mode. The (R)-THP seems to inhibit the release of products from the enzyme when higher concentrations of the racemic substrate are added to the reaction. N-methyltransferase with a substrate preference for (+-)-pavine and (S)-reticuline, but also active with the protoberberines scoulerine and stylopine and, to a lesser extent, tetrahydropapaverine (THP) and tetrahydropalmatine. Is not active on (R)-reticuline, cryptopine, glaucine, codeine, canadaline, noscapine and berbamine. The chain is Pavine N-methyltransferase from Thalictrum flavum subsp. glaucum (Yellow meadow rue).